The sequence spans 159 residues: 2-C-methyl-D-erythritol 2,4-cyclodiphosphate synthase (159 aa).

A divalent metal cation-binding residues include D10 and H12. Residues 10-12 and 36-37 each bind 4-CDP-2-C-methyl-D-erythritol 2-phosphate; these read DVH and HS. H44 is an a divalent metal cation binding site. 4-CDP-2-C-methyl-D-erythritol 2-phosphate is bound by residues 58-60, 63-67, 102-108, 134-137, F141, and R144; these read DIG, FPDTD, AQAPRMA, and TTSE.

It belongs to the IspF family. As to quaternary structure, homotrimer. It depends on a divalent metal cation as a cofactor.

The catalysed reaction is 4-CDP-2-C-methyl-D-erythritol 2-phosphate = 2-C-methyl-D-erythritol 2,4-cyclic diphosphate + CMP. It functions in the pathway isoprenoid biosynthesis; isopentenyl diphosphate biosynthesis via DXP pathway; isopentenyl diphosphate from 1-deoxy-D-xylulose 5-phosphate: step 4/6. In terms of biological role, involved in the biosynthesis of isopentenyl diphosphate (IPP) and dimethylallyl diphosphate (DMAPP), two major building blocks of isoprenoid compounds. Catalyzes the conversion of 4-diphosphocytidyl-2-C-methyl-D-erythritol 2-phosphate (CDP-ME2P) to 2-C-methyl-D-erythritol 2,4-cyclodiphosphate (ME-CPP) with a corresponding release of cytidine 5-monophosphate (CMP). The polypeptide is 2-C-methyl-D-erythritol 2,4-cyclodiphosphate synthase (Cellvibrio japonicus (strain Ueda107) (Pseudomonas fluorescens subsp. cellulosa)).